A 615-amino-acid polypeptide reads, in one-letter code: Isocitrate dehydrogenase kinase/phosphatase (615 aa).

ATP-binding positions include 328 to 334 (APGIRGL) and K349. The active site involves D384. A disordered region spans residues 595–615 (AEPPATPPVKQPDAGPARRVA).

Belongs to the AceK family.

It localises to the cytoplasm. It carries out the reaction L-seryl-[isocitrate dehydrogenase] + ATP = O-phospho-L-seryl-[isocitrate dehydrogenase] + ADP + H(+). Its function is as follows. Bifunctional enzyme which can phosphorylate or dephosphorylate isocitrate dehydrogenase (IDH) on a specific serine residue. This is a regulatory mechanism which enables bacteria to bypass the Krebs cycle via the glyoxylate shunt in response to the source of carbon. When bacteria are grown on glucose, IDH is fully active and unphosphorylated, but when grown on acetate or ethanol, the activity of IDH declines drastically concomitant with its phosphorylation. This is Isocitrate dehydrogenase kinase/phosphatase from Cupriavidus taiwanensis (strain DSM 17343 / BCRC 17206 / CCUG 44338 / CIP 107171 / LMG 19424 / R1) (Ralstonia taiwanensis (strain LMG 19424)).